The chain runs to 539 residues: 3-methylmercaptopropionyl-CoA ligase (539 aa).

Thr185 is a Mg(2+) binding site. ATP contacts are provided by His231, Gly303, His324, Ala325, and Ser329. Glu330 is a Mg(2+) binding site. Residues Gln359, Asp417, Arg432, and Lys523 each contribute to the ATP site.

The protein belongs to the ATP-dependent AMP-binding enzyme family. As to quaternary structure, homodimer. Mg(2+) serves as cofactor.

It carries out the reaction 3-(methylsulfanyl)propanoate + ATP + CoA = 3-(methylsulfanyl)propanoyl-CoA + AMP + diphosphate. It participates in lipid metabolism; fatty acid metabolism. Activated by LiCl and NH(4)Cl. Inhibited by dimethylsulfoniopropionate (DMSP). MMPA concentrations above 2 mM relieve the DMSP inhibition and 80% of activity is regained at an MMPA concentration of 8 mM. Its function is as follows. Involved in the assimilation of dimethylsulphoniopropionate (DMSP), an important compound in the fixation of carbon in marine phytoplankton. Catalyzes the ATP-dependent ligation of methylmercaptopropionate (MMPA) and CoA to yield methylmercaptopropionate-CoA (MMPA-CoA). It is also active with short-chain-fatty-acid (carboxylic acids up to six carbons in length). The polypeptide is 3-methylmercaptopropionyl-CoA ligase (Ruegeria pomeroyi (strain ATCC 700808 / DSM 15171 / DSS-3) (Silicibacter pomeroyi)).